We begin with the raw amino-acid sequence, 209 residues long: Large ribosomal subunit protein eL13 (209 aa).

It belongs to the eukaryotic ribosomal protein eL13 family. In terms of assembly, component of the 60S large ribosomal subunit (LSU).

The protein resides in the cytoplasm. Its function is as follows. Component of the ribosome, a large ribonucleoprotein complex responsible for the synthesis of proteins in the cell. The small ribosomal subunit (SSU) binds messenger RNAs (mRNAs) and translates the encoded message by selecting cognate aminoacyl-transfer RNA (tRNA) molecules. The large subunit (LSU) contains the ribosomal catalytic site termed the peptidyl transferase center (PTC), which catalyzes the formation of peptide bonds, thereby polymerizing the amino acids delivered by tRNAs into a polypeptide chain. The nascent polypeptides leave the ribosome through a tunnel in the LSU and interact with protein factors that function in enzymatic processing, targeting, and the membrane insertion of nascent chains at the exit of the ribosomal tunnel. As part of the LSU, it is probably required for its formation and the maturation of rRNAs. This Dictyostelium discoideum (Social amoeba) protein is Large ribosomal subunit protein eL13 (rpl13).